Here is a 131-residue protein sequence, read N- to C-terminus: C-type natriuretic peptide 1 (131 aa).

The signal sequence occupies residues 1-22; sequence MLCPVLLCATLLLLTPFEVTEA. The propeptide occupies 23–109; that stretch reads RALHPSADAV…KRAEPDRSRR (87 aa). An intrachain disulfide couples Cys-115 to Cys-131.

This sequence belongs to the natriuretic peptide family. In terms of tissue distribution, brain and spinal cord.

Its subcellular location is the secreted. Functionally, exhibits natriuretic and vasodepressant activity. Has cGMP-stimulating activity. May help to regulate body fluid homeostasis in a variety of aquatic environments. This is C-type natriuretic peptide 1 from Oryzias latipes (Japanese rice fish).